We begin with the raw amino-acid sequence, 20 residues long: Antiviral protein Y3 (20 aa).

This chain is Antiviral protein Y3, found in Pleurotus citrinopileatus (Golden oyster mushroom).